We begin with the raw amino-acid sequence, 396 residues long: MPPKKGGDGIKPPPIIGRFGTSLKIGIVGLPNVGKSTFFNVLTNSQASAENFPFCTIDPNESRVPVPDERFDFLCQYHKPASKIPAFLNVVDIAGLVKGAHNGQGLGNAFLSHISACDGIFHLTRAFEDDDITHVEGSVDPIRDIEIIHEELQLKDEEMIGPIIDKLEKVAVRGGDKKLKPEYDIMCKVKSWVIDQKKPVRFYHDWNDKEIEVLNKHLFLTSKPMVYLVNLSEKDYIRKKNKWLIKIKEWVDKYDPGALVIPFSGALELKLQELSAEERQKYLEANMTQSALPKIIKAGFAALQLEYFFTAGPDEVRAWTIRKGTKAPQAAGKIHTDFEKGFIMAEVMKYEDFKEEGSENAVKAAGKYRQQGRNYIVEDGDIIFFKFNTPQQPKKK.

Residues L23–L283 enclose the OBG-type G domain. Residue N32–T37 participates in ATP binding. The Mg(2+) site is built by S36 and T56. ATP is bound at residue L231. Residues L267–L274 carry the Nuclear export signal motif. N6-acetyllysine is present on K294. The region spanning Q304–F387 is the TGS domain.

It belongs to the TRAFAC class OBG-HflX-like GTPase superfamily. OBG GTPase family. YchF/OLA1 subfamily. Monomer. Mg(2+) serves as cofactor. Expressed in all tissues tested but its expression is more abundant in testis, liver, lung, and brain. Overexpressed in several malignancies, including cancers of the colon, rectum, ovary, lung, stomach, and uterus.

Its subcellular location is the cytoplasm. The protein resides in the nucleus. It localises to the nucleolus. Hydrolyzes ATP, and can also hydrolyze GTP with lower efficiency. Has lower affinity for GTP. The protein is Obg-like ATPase 1 of Homo sapiens (Human).